The following is a 328-amino-acid chain: Surface antigen CRP170 (328 aa).

2 consecutive repeats follow at residues 38–102 (NAPC…CKKC) and 103–167 (NAPC…CKKC).

The protein is Surface antigen CRP170 of Giardia intestinalis (Giardia lamblia).